Consider the following 312-residue polypeptide: Ribonuclease Z (312 aa).

Zn(2+) contacts are provided by His63, His65, Asp67, His68, His141, Asp212, and His270. Asp67 (proton acceptor) is an active-site residue.

This sequence belongs to the RNase Z family. In terms of assembly, homodimer. Requires Zn(2+) as cofactor.

The enzyme catalyses Endonucleolytic cleavage of RNA, removing extra 3' nucleotides from tRNA precursor, generating 3' termini of tRNAs. A 3'-hydroxy group is left at the tRNA terminus and a 5'-phosphoryl group is left at the trailer molecule.. In terms of biological role, zinc phosphodiesterase, which displays some tRNA 3'-processing endonuclease activity. Probably involved in tRNA maturation, by removing a 3'-trailer from precursor tRNA. This Lactobacillus acidophilus (strain ATCC 700396 / NCK56 / N2 / NCFM) protein is Ribonuclease Z.